The sequence spans 106 residues: MIISTTSQLEGRPIAEYLGVVSSESVQGINFVRDFFTRFRDFFGGRSQTLESALREAREQATEELKARARQLQADAVVGVDFEISMPSVQGGMVVVFATGTAVRLK.

This sequence belongs to the UPF0145 family.

The sequence is that of UPF0145 protein Pput_2816 from Pseudomonas putida (strain ATCC 700007 / DSM 6899 / JCM 31910 / BCRC 17059 / LMG 24140 / F1).